The sequence spans 218 residues: Ras-related protein RABE1e (218 aa).

22–29 contributes to the GTP binding site; it reads GDSGVGKS. The Effector region motif lies at 44-52; it reads FITTIGIDF. Residues 70–74, 128–131, and 159–160 each bind GTP; these read DTAGQ, NKAD, and SA. The disordered stretch occupies residues 182-218; the sequence is TESDTKAEPQGIKITKQDANKASSSSTNEKSACCSYV. Positions 201–211 are enriched in polar residues; sequence NKASSSSTNEK. Residues C214 and C215 are each lipidated (S-geranylgeranyl cysteine).

The protein belongs to the small GTPase superfamily. Rab family. Interacts with PI5K2.

Its subcellular location is the golgi apparatus membrane. The protein localises to the cell membrane. Its function is as follows. Involved in membrane trafficking from the Golgi to the plasma membrane. This is Ras-related protein RABE1e (RABE1E) from Arabidopsis thaliana (Mouse-ear cress).